Consider the following 434-residue polypeptide: Trigger factor (434 aa).

The 86-residue stretch at 161–246 folds into the PPIase FKBP-type domain; that stretch reads EDRVVIDFTG…VKQVQAPVLP (86 aa).

Belongs to the FKBP-type PPIase family. Tig subfamily.

The protein localises to the cytoplasm. It carries out the reaction [protein]-peptidylproline (omega=180) = [protein]-peptidylproline (omega=0). In terms of biological role, involved in protein export. Acts as a chaperone by maintaining the newly synthesized protein in an open conformation. Functions as a peptidyl-prolyl cis-trans isomerase. In Dechloromonas aromatica (strain RCB), this protein is Trigger factor.